The following is a 378-amino-acid chain: B3 domain-containing protein Os03g0622200 (378 aa).

A DNA-binding region (TF-B3 1) is located at residues 29–124; sequence SKHFLKHMVG…SFDVLIFDPS (96 aa). Residues 140 to 159 are disordered; the sequence is GRAENSAGAEQGGRNGRRTP. The TF-B3 2 DNA-binding region spans 256-370; the sequence is FVQVIHSSHV…TMTVHVLRRV (115 aa).

Its subcellular location is the nucleus. The chain is B3 domain-containing protein Os03g0622200 from Oryza sativa subsp. japonica (Rice).